The chain runs to 501 residues: Uridine kinase (501 aa).

S17 carries the phosphoserine modification. ATP is bound at residue 63-70 (GASGSGKT). The residue at position 276 (S276) is a Phosphoserine.

The protein belongs to the uridine kinase family.

It is found in the cytoplasm. The protein localises to the nucleus. It catalyses the reaction uridine + ATP = UMP + ADP + H(+). The catalysed reaction is cytidine + ATP = CMP + ADP + H(+). The protein operates within pyrimidine metabolism; CTP biosynthesis via salvage pathway; CTP from cytidine: step 1/3. It participates in pyrimidine metabolism; UMP biosynthesis via salvage pathway; UMP from uridine: step 1/1. In terms of biological role, catalyzes the conversion of uridine into UMP and cytidine into CMP in the pyrimidine salvage pathway. This Saccharomyces cerevisiae (strain ATCC 204508 / S288c) (Baker's yeast) protein is Uridine kinase (URK1).